The chain runs to 293 residues: Elongation factor Ts (293 aa).

Residues 80-83 (TDFV) are involved in Mg(2+) ion dislocation from EF-Tu.

It belongs to the EF-Ts family.

Its subcellular location is the cytoplasm. In terms of biological role, associates with the EF-Tu.GDP complex and induces the exchange of GDP to GTP. It remains bound to the aminoacyl-tRNA.EF-Tu.GTP complex up to the GTP hydrolysis stage on the ribosome. The sequence is that of Elongation factor Ts from Enterococcus faecalis (strain ATCC 700802 / V583).